The primary structure comprises 354 residues: Tetraacyldisaccharide 4'-kinase (354 aa).

Position 53–60 (53–60) interacts with ATP; the sequence is AWGGTGKT.

Belongs to the LpxK family.

It carries out the reaction a lipid A disaccharide + ATP = a lipid IVA + ADP + H(+). The protein operates within glycolipid biosynthesis; lipid IV(A) biosynthesis; lipid IV(A) from (3R)-3-hydroxytetradecanoyl-[acyl-carrier-protein] and UDP-N-acetyl-alpha-D-glucosamine: step 6/6. In terms of biological role, transfers the gamma-phosphate of ATP to the 4'-position of a tetraacyldisaccharide 1-phosphate intermediate (termed DS-1-P) to form tetraacyldisaccharide 1,4'-bis-phosphate (lipid IVA). This is Tetraacyldisaccharide 4'-kinase from Nitratidesulfovibrio vulgaris (strain ATCC 29579 / DSM 644 / CCUG 34227 / NCIMB 8303 / VKM B-1760 / Hildenborough) (Desulfovibrio vulgaris).